We begin with the raw amino-acid sequence, 222 residues long: Adenylate kinase (222 aa).

10-15 (GAGKGT) is an ATP binding site. The segment at 30–59 (STGDMLRAAVKAGTPLGIEAKKVMDAGGLV) is NMP. Residues T31, R36, 57–59 (GLV), 85–88 (GFPR), and Q92 each bind AMP. The segment at 122–159 (GRRVHVASGRTYHVKYNPPKNEGQDDETGDPLIQRDDD) is LID. Residues R123 and 132-133 (TY) each bind ATP. A disordered region spans residues 135–162 (VKYNPPKNEGQDDETGDPLIQRDDDKEE). AMP-binding residues include R156 and R167. G207 is an ATP binding site.

Belongs to the adenylate kinase family. Monomer.

It localises to the cytoplasm. It carries out the reaction AMP + ATP = 2 ADP. The protein operates within purine metabolism; AMP biosynthesis via salvage pathway; AMP from ADP: step 1/1. Its function is as follows. Catalyzes the reversible transfer of the terminal phosphate group between ATP and AMP. Plays an important role in cellular energy homeostasis and in adenine nucleotide metabolism. The sequence is that of Adenylate kinase from Ralstonia nicotianae (strain ATCC BAA-1114 / GMI1000) (Ralstonia solanacearum).